Consider the following 284-residue polypeptide: 2-dehydro-3-deoxyphosphooctonate aldolase (284 aa).

This sequence belongs to the KdsA family.

The protein resides in the cytoplasm. It carries out the reaction D-arabinose 5-phosphate + phosphoenolpyruvate + H2O = 3-deoxy-alpha-D-manno-2-octulosonate-8-phosphate + phosphate. The protein operates within carbohydrate biosynthesis; 3-deoxy-D-manno-octulosonate biosynthesis; 3-deoxy-D-manno-octulosonate from D-ribulose 5-phosphate: step 2/3. Its pathway is bacterial outer membrane biogenesis; lipopolysaccharide biosynthesis. The polypeptide is 2-dehydro-3-deoxyphosphooctonate aldolase (Vibrio atlanticus (strain LGP32) (Vibrio splendidus (strain Mel32))).